A 213-amino-acid chain; its full sequence is 3-isopropylmalate dehydratase small subunit (213 aa).

This sequence belongs to the LeuD family. LeuD type 1 subfamily. Heterodimer of LeuC and LeuD.

The enzyme catalyses (2R,3S)-3-isopropylmalate = (2S)-2-isopropylmalate. The protein operates within amino-acid biosynthesis; L-leucine biosynthesis; L-leucine from 3-methyl-2-oxobutanoate: step 2/4. In terms of biological role, catalyzes the isomerization between 2-isopropylmalate and 3-isopropylmalate, via the formation of 2-isopropylmaleate. The polypeptide is 3-isopropylmalate dehydratase small subunit (Aromatoleum aromaticum (strain DSM 19018 / LMG 30748 / EbN1) (Azoarcus sp. (strain EbN1))).